The primary structure comprises 306 residues: UDP-N-acetylenolpyruvoylglucosamine reductase (306 aa).

Positions 25–188 (RVGGPADWLF…IEARFRAEPG (164 aa)) constitute an FAD-binding PCMH-type domain. The active site involves Arg-168. Basic and acidic residues predominate over residues 199 to 214 (EQLARRDASQPTKDRS). Positions 199 to 232 (EQLARRDASQPTKDRSAGSTFRNPAGYSSTGRAD) are disordered. Polar residues predominate over residues 215–229 (AGSTFRNPAGYSSTG). Ser-217 acts as the Proton donor in catalysis. Glu-299 is a catalytic residue.

This sequence belongs to the MurB family. The cofactor is FAD.

The protein resides in the cytoplasm. It carries out the reaction UDP-N-acetyl-alpha-D-muramate + NADP(+) = UDP-N-acetyl-3-O-(1-carboxyvinyl)-alpha-D-glucosamine + NADPH + H(+). It functions in the pathway cell wall biogenesis; peptidoglycan biosynthesis. Functionally, cell wall formation. The protein is UDP-N-acetylenolpyruvoylglucosamine reductase of Paracoccus denitrificans (strain Pd 1222).